We begin with the raw amino-acid sequence, 145 residues long: Chaperonin GroEL (145 aa).

It belongs to the chaperonin (HSP60) family. As to quaternary structure, forms a cylinder of 14 subunits composed of two heptameric rings stacked back-to-back. Interacts with the co-chaperonin GroES.

It is found in the cytoplasm. It carries out the reaction ATP + H2O + a folded polypeptide = ADP + phosphate + an unfolded polypeptide.. Its function is as follows. Together with its co-chaperonin GroES, plays an essential role in assisting protein folding. The GroEL-GroES system forms a nano-cage that allows encapsulation of the non-native substrate proteins and provides a physical environment optimized to promote and accelerate protein folding. This Thermus thermophilus protein is Chaperonin GroEL.